A 101-amino-acid polypeptide reads, in one-letter code: Urease subunit beta (101 aa).

Belongs to the urease beta subunit family. Heterotrimer of UreA (gamma), UreB (beta) and UreC (alpha) subunits. Three heterotrimers associate to form the active enzyme.

It localises to the cytoplasm. It catalyses the reaction urea + 2 H2O + H(+) = hydrogencarbonate + 2 NH4(+). Its pathway is nitrogen metabolism; urea degradation; CO(2) and NH(3) from urea (urease route): step 1/1. The protein is Urease subunit beta of Cupriavidus necator (strain ATCC 17699 / DSM 428 / KCTC 22496 / NCIMB 10442 / H16 / Stanier 337) (Ralstonia eutropha).